The sequence spans 598 residues: Protein unc-93 homolog B1 (598 aa).

The segment at 1-36 is disordered; that stretch reads MEVEPPLYPVAGAAGPQGDEDRHGVPDGPEAPLDEL. Transmembrane regions (helical) follow at residues 64 to 84, 110 to 130, 132 to 152, 160 to 180, and 223 to 243; these read VLAASTGVTLTYGVYLGLLQM, KMLMGINVTPIAALLYTPVLI, FFGTKWMMFLAVGIYALFVST, TLVPSAVALGMAIVPLWASMG, and IFYSFFHLSFACAQLPMIYFL. Residues Asn-251 and Asn-272 are each glycosylated (N-linked (GlcNAc...) asparagine). 5 consecutive transmembrane segments (helical) span residues 285–305, 343–363, 378–398, 403–423, and 428–448; these read LIVVESVLMAVAFLAMLMVLG, LVPFFIYSGFEVLFACTGFAL, LLIAYSLGASASSVLGLLGLW, VPLVAGAGLHLLLTLSLFFWA, and VLQHSWIFYFVAALWGVGSAL. Asn-449 is a glycosylation site (N-linked (GlcNAc...) asparagine). The next 2 membrane-spanning stretches (helical) occupy residues 469-489 and 495-515; these read FIFTIYHWWQAVAIFVVYLGS and AKLAVLLVTLVAAAASYLWME. The disordered stretch occupies residues 524-598; that stretch reads PRQPRIPKPQ…ALGGDGPEEQ (75 aa). Acidic residues predominate over residues 544–554; the sequence is EDNSDESDMEG. 2 positions are modified to phosphoserine: Ser-547 and Ser-550.

This sequence belongs to the unc-93 family. As to quaternary structure, interacts with TLR3, TLR5, TLR7, TLR8, TLR9 and TLR13 (probably via transmembrane domain). Post-translationally, N-glycosylated.

Its subcellular location is the endoplasmic reticulum membrane. The protein localises to the endosome. It localises to the lysosome. The protein resides in the cytoplasmic vesicle. It is found in the phagosome. Plays an important role in innate and adaptive immunity by regulating nucleotide-sensing Toll-like receptor (TLR) signaling. Required for the transport of a subset of TLRs (including TLR3, TLR7 and TLR9) from the endoplasmic reticulum to endolysosomes where they can engage pathogen nucleotides and activate signaling cascades. May play a role in autoreactive B-cells removal. The polypeptide is Protein unc-93 homolog B1 (Mus musculus (Mouse)).